Here is a 405-residue protein sequence, read N- to C-terminus: Protein held out wings (405 aa).

The KH domain occupies 142–210; the sequence is YVPVREHPDF…HLSDDLHVLI (69 aa).

As to quaternary structure, homodimer. Interacts with Sxl; promoting nuclear retention of msl-2 transcripts. In terms of tissue distribution, during embryogenesis, expression is seen in mesodermal precursors of somatic, visceral and pharyngeal muscle. Later in embryogenesis, expression is restricted to heart and muscle attachment sites of the epidermis. During onset of metamorphosis, expression is seen in muscle and muscle attachment cells.

The protein localises to the nucleus. RNA-binding protein involved in muscle development and dosage compensation. Vital role in steroid regulation of muscle development and to control heart rate. Required during embryogenesis, in late stages of somatic muscle development, for myotube migration and during metamorphosis for muscle reorganization. Required for integrin-mediated cell-adhesion in wing blade. Together with Sxl, acts as an inhibitor of dosage compensation in females by preventing production of msl-2 protein, an essential component of the MSL complex. Specifically binds to the 5'-UTR of msl-2 transcripts and cooperates with Sxl to promote nuclear retention of msl-2 mRNAs. This Drosophila melanogaster (Fruit fly) protein is Protein held out wings (how).